Reading from the N-terminus, the 255-residue chain is Small ribosomal subunit protein eS1A (255 aa).

The segment covering 1–18 (MAVGKNKRLSKGKKGQKK) has biased composition (basic residues). Residues 1 to 20 (MAVGKNKRLSKGKKGQKKRV) are disordered. An N-acetylalanine; partial modification is found at Ala-2. Phosphothreonine is present on Thr-245. Residue Lys-248 forms a Glycyl lysine isopeptide (Lys-Gly) (interchain with G-Cter in ubiquitin) linkage. Residue Thr-254 is modified to Phosphothreonine.

It belongs to the eukaryotic ribosomal protein eS1 family. Component of the small ribosomal subunit. Mature ribosomes consist of a small (40S) and a large (60S) subunit. The 40S subunit contains about 33 different proteins and 1 molecule of RNA (18S). The 60S subunit contains about 49 different proteins and 3 molecules of RNA (25S, 5.8S and 5S).

Its subcellular location is the cytoplasm. This chain is Small ribosomal subunit protein eS1A, found in Saccharomyces cerevisiae (strain RM11-1a) (Baker's yeast).